Reading from the N-terminus, the 62-residue chain is Large ribosomal subunit protein bL28 (62 aa).

The interval 1 to 27 (MAKECVITGRKSRSGNKRSHAMNSSKR) is disordered. The segment covering 10–20 (RKSRSGNKRSH) has biased composition (basic residues).

This sequence belongs to the bacterial ribosomal protein bL28 family.

The chain is Large ribosomal subunit protein bL28 from Listeria innocua serovar 6a (strain ATCC BAA-680 / CLIP 11262).